The chain runs to 261 residues: Cytochrome c oxidase subunit 3 (261 aa).

Over 1-15 the chain is Mitochondrial matrix; it reads MTHQTHAYHMVNPSP. Residues 16 to 34 form a helical membrane-spanning segment; the sequence is WPLTGALSALLMTSGLAMW. At 35-40 the chain is on the mitochondrial intermembrane side; sequence FHFNSP. A helical transmembrane segment spans residues 41-66; that stretch reads SLLLIGLVTNTLTMYQWWRDIVREGT. The Mitochondrial matrix segment spans residues 67–72; it reads FQGHHT. The helical transmembrane segment at 73–105 threads the bilayer; sequence PIVQKGLRYGMILFIISEVFFFAGFFWAFYHSS. Residues 106 to 128 lie on the Mitochondrial intermembrane side of the membrane; it reads LAPTPELGGCWPPTGINPLNPLE. A helical membrane pass occupies residues 129 to 152; it reads VPLLNTSVLLASGVSITWAHHSLM. The Mitochondrial matrix segment spans residues 153–155; sequence EGN. The helical transmembrane segment at 156–183 threads the bilayer; sequence RKNMQQALAITILLGIYFTLLQASEYYE. Residues 184-190 are Mitochondrial intermembrane-facing; that stretch reads TSFTISD. The helical transmembrane segment at 191–223 threads the bilayer; sequence GVYGSTFFMATGFHGLHVIIGSTFLTVCLLRQF. Topologically, residues 224–232 are mitochondrial matrix; sequence NFHFTSNHH. The helical transmembrane segment at 233–256 threads the bilayer; sequence FGFEAAAWYWHFVDVVWLFLYVSI. Residues 257-261 are Mitochondrial intermembrane-facing; that stretch reads YWWGS.

This sequence belongs to the cytochrome c oxidase subunit 3 family. Component of the cytochrome c oxidase (complex IV, CIV), a multisubunit enzyme composed of 14 subunits. The complex is composed of a catalytic core of 3 subunits MT-CO1, MT-CO2 and MT-CO3, encoded in the mitochondrial DNA, and 11 supernumerary subunits COX4I, COX5A, COX5B, COX6A, COX6B, COX6C, COX7A, COX7B, COX7C, COX8 and NDUFA4, which are encoded in the nuclear genome. The complex exists as a monomer or a dimer and forms supercomplexes (SCs) in the inner mitochondrial membrane with NADH-ubiquinone oxidoreductase (complex I, CI) and ubiquinol-cytochrome c oxidoreductase (cytochrome b-c1 complex, complex III, CIII), resulting in different assemblies (supercomplex SCI(1)III(2)IV(1) and megacomplex MCI(2)III(2)IV(2)).

Its subcellular location is the mitochondrion inner membrane. It catalyses the reaction 4 Fe(II)-[cytochrome c] + O2 + 8 H(+)(in) = 4 Fe(III)-[cytochrome c] + 2 H2O + 4 H(+)(out). Its function is as follows. Component of the cytochrome c oxidase, the last enzyme in the mitochondrial electron transport chain which drives oxidative phosphorylation. The respiratory chain contains 3 multisubunit complexes succinate dehydrogenase (complex II, CII), ubiquinol-cytochrome c oxidoreductase (cytochrome b-c1 complex, complex III, CIII) and cytochrome c oxidase (complex IV, CIV), that cooperate to transfer electrons derived from NADH and succinate to molecular oxygen, creating an electrochemical gradient over the inner membrane that drives transmembrane transport and the ATP synthase. Cytochrome c oxidase is the component of the respiratory chain that catalyzes the reduction of oxygen to water. Electrons originating from reduced cytochrome c in the intermembrane space (IMS) are transferred via the dinuclear copper A center (CU(A)) of subunit 2 and heme A of subunit 1 to the active site in subunit 1, a binuclear center (BNC) formed by heme A3 and copper B (CU(B)). The BNC reduces molecular oxygen to 2 water molecules using 4 electrons from cytochrome c in the IMS and 4 protons from the mitochondrial matrix. The sequence is that of Cytochrome c oxidase subunit 3 (MT-CO3) from Oryctolagus cuniculus (Rabbit).